A 489-amino-acid chain; its full sequence is Putative L,D-transpeptidase HI_1667 (489 aa).

Residues 10 to 29 form a helical membrane-spanning segment; it reads LSLFALSLSMMMSGCVLVGL. The 180-residue stretch at 254-433 folds into the L,D-TPase catalytic domain; the sequence is NGIFVNIPSY…ETRKNTVLAS (180 aa). Histidine 384 (proton donor/acceptor) is an active-site residue. Cysteine 403 serves as the catalytic Nucleophile.

It belongs to the YkuD family.

It is found in the membrane. The protein operates within cell wall biogenesis; peptidoglycan biosynthesis. This Haemophilus influenzae (strain ATCC 51907 / DSM 11121 / KW20 / Rd) protein is Putative L,D-transpeptidase HI_1667.